We begin with the raw amino-acid sequence, 211 residues long: Pyridoxine/pyridoxamine 5'-phosphate oxidase (211 aa).

Substrate is bound by residues Arg-7–Tyr-10 and Lys-65. FMN is bound by residues Arg-60–Lys-65, Phe-75–Thr-76, Arg-81, and Lys-82. Tyr-122, Arg-126, and Ser-130 together coordinate substrate. FMN contacts are provided by residues Gln-139–Ser-140 and Trp-183. Arg-189 to His-191 is a binding site for substrate. Arg-193 lines the FMN pocket.

This sequence belongs to the pyridoxamine 5'-phosphate oxidase family. As to quaternary structure, homodimer. FMN is required as a cofactor.

It catalyses the reaction pyridoxamine 5'-phosphate + O2 + H2O = pyridoxal 5'-phosphate + H2O2 + NH4(+). The catalysed reaction is pyridoxine 5'-phosphate + O2 = pyridoxal 5'-phosphate + H2O2. The protein operates within cofactor metabolism; pyridoxal 5'-phosphate salvage; pyridoxal 5'-phosphate from pyridoxamine 5'-phosphate: step 1/1. It functions in the pathway cofactor metabolism; pyridoxal 5'-phosphate salvage; pyridoxal 5'-phosphate from pyridoxine 5'-phosphate: step 1/1. Catalyzes the oxidation of either pyridoxine 5'-phosphate (PNP) or pyridoxamine 5'-phosphate (PMP) into pyridoxal 5'-phosphate (PLP). The protein is Pyridoxine/pyridoxamine 5'-phosphate oxidase of Herminiimonas arsenicoxydans.